A 172-amino-acid chain; its full sequence is SsrA-binding protein (172 aa).

This sequence belongs to the SmpB family.

It localises to the cytoplasm. Required for rescue of stalled ribosomes mediated by trans-translation. Binds to transfer-messenger RNA (tmRNA), required for stable association of tmRNA with ribosomes. tmRNA and SmpB together mimic tRNA shape, replacing the anticodon stem-loop with SmpB. tmRNA is encoded by the ssrA gene; the 2 termini fold to resemble tRNA(Ala) and it encodes a 'tag peptide', a short internal open reading frame. During trans-translation Ala-aminoacylated tmRNA acts like a tRNA, entering the A-site of stalled ribosomes, displacing the stalled mRNA. The ribosome then switches to translate the ORF on the tmRNA; the nascent peptide is terminated with the 'tag peptide' encoded by the tmRNA and targeted for degradation. The ribosome is freed to recommence translation, which seems to be the essential function of trans-translation. This is SsrA-binding protein from Dehalococcoides mccartyi (strain ATCC BAA-2100 / JCM 16839 / KCTC 5957 / BAV1).